Consider the following 626-residue polypeptide: UvrABC system protein C (626 aa).

The region spanning 20-97 (ECSGVYKMLD…IKKFQPKFNI (78 aa)) is the GIY-YIG domain. Residues 207–242 (IALQANLSKKMQELSSQMRFEEAAEIRDRIKALSYV) enclose the UVR domain.

The protein belongs to the UvrC family. As to quaternary structure, interacts with UvrB in an incision complex.

The protein localises to the cytoplasm. In terms of biological role, the UvrABC repair system catalyzes the recognition and processing of DNA lesions. UvrC both incises the 5' and 3' sides of the lesion. The N-terminal half is responsible for the 3' incision and the C-terminal half is responsible for the 5' incision. The polypeptide is UvrABC system protein C (Rickettsia prowazekii (strain Madrid E)).